We begin with the raw amino-acid sequence, 126 residues long: Cytochrome c2 (126 aa).

The heme c site is built by Cys-17, Cys-20, His-21, and Met-101.

The protein belongs to the cytochrome c family. In terms of processing, binds 1 heme c group covalently per subunit.

It localises to the periplasm. In terms of biological role, cytochrome c2 is found mainly in purple, non-sulfur, photosynthetic bacteria where it functions as the electron donor to the oxidized bacteriochlorophyll in the photophosphorylation pathway. However, it may also have a role in the respiratory chain and is found in some non-photosynthetic bacteria. This is Cytochrome c2 from Rhodovulum adriaticum (Rhodopseudomonas adriatica).